Reading from the N-terminus, the 506-residue chain is MVVRPYNDELRYLEKVSDHCWRIKKGFQPNMNVEGCFYVNSRLERLMLEELKNSCRPGAVGGFLPGVKQIANVAALPGIVGRSIGLPDIHSGYGFAIGNMAAFDMNDPLSVVSPGGVGFDINCGVRLLRTNLYEKDVQPVKEQLAQSLFDHIPVGVGSKGIIPMNARDLEEALEMGMDWSLREGYVWAEDKEHCEEYGRMLNADPAKVSMRAKKRGLPQLGTLGAGNHYAEIQVVDEIYDKWSASKMGIEEKGQVVVMIHSGSRGFGHQVATDALVQMEKAMKRDKIETNDRQLACARINSVEGQDYLKAMAAAANFAWVNRSSMTFLTRQAFAKMFNTTPDDLDMHVIYDVSHNIAKVENHMVDGKERKLLVHRKGSTRAFPPHHPLIPVDYQLTGQPVLVGGTMGTCSYVLTGTEQGMQETFGSTCHGAGRALSRAKSRRNLDYKDVLDKLDQLGIAIRVASPKLVMEEAPESYKDVTDVVDTCHAAGISKKCIKMRPIAVIKG.

Mn(2+)-binding residues include Asp120, Cys123, His228, His260, and His354. 227 to 231 (NHYAE) serves as a coordination point for GMP. GMP is bound by residues 354–355 (HN), 403–406 (GGTM), Ser410, 429–432 (HGAG), and Lys505. His429 serves as the catalytic GMP-histidine intermediate.

The protein belongs to the RtcB family. Catalytic component of the tRNA-splicing ligase complex. It depends on Mn(2+) as a cofactor.

The enzyme catalyses a 3'-end 3'-phospho-ribonucleotide-RNA + a 5'-end dephospho-ribonucleoside-RNA + GTP = a ribonucleotidyl-ribonucleotide-RNA + GMP + diphosphate. It catalyses the reaction a 3'-end 2',3'-cyclophospho-ribonucleotide-RNA + a 5'-end dephospho-ribonucleoside-RNA + GTP + H2O = a ribonucleotidyl-ribonucleotide-RNA + GMP + diphosphate + H(+). Catalytic subunit of the tRNA-splicing ligase complex that acts by directly joining spliced tRNA halves to mature-sized tRNAs by incorporating the precursor-derived splice junction phosphate into the mature tRNA as a canonical 3',5'-phosphodiester. May act as an RNA ligase with broad substrate specificity, and may function toward other RNAs. The protein is RNA-splicing ligase RtcB homolog of Drosophila melanogaster (Fruit fly).